The sequence spans 387 residues: Decapping nuclease RAI1 (387 aa).

Residue Glu172 participates in a divalent metal cation binding. Ser198 bears the Phosphoserine mark. Substrate is bound at residue Glu221. A divalent metal cation is bound by residues Asp223, Glu241, and Leu242. The substrate site is built by Lys243 and Gln267. Residues 273–387 (IPRIIYGFKD…GFKEWRKSLK (115 aa)) are interaction with RAT1.

Belongs to the DXO/Dom3Z family. In terms of assembly, interacts with RAT1, RTT103 and pre-60S ribosomal subunits. Interacts with RAT1; the interaction is direct, stabilizes RAT1 protein structure and stimulates its exoribonuclease activity. The interaction also stimulates RAI1 pyrophosphohydrolase activity, probably by recruiting it to mRNA substrates. The cofactor is a divalent metal cation.

The protein localises to the nucleus. It catalyses the reaction a 5'-end NAD(+)-phospho-ribonucleoside in mRNA + H2O = a 5'-end phospho-ribonucleoside in mRNA + NAD(+) + H(+). The catalysed reaction is a 5'-end (N(7)-methyl 5'-triphosphoguanosine)-ribonucleoside-ribonucleotide in mRNA + H2O = a (N(7)-methyl 5'-triphosphoguanosine)-nucleoside + a 5'-end phospho-ribonucleoside in mRNA + H(+). It carries out the reaction a 5'-end triphospho-ribonucleoside in mRNA + H2O = a 5'-end phospho-ribonucleoside in mRNA + diphosphate + H(+). Its function is as follows. Decapping enzyme for NAD-capped RNAs: specifically hydrolyzes the nicotinamide adenine dinucleotide (NAD) cap from a subset of RNAs by removing the entire NAD moiety from the 5'-end of an NAD-capped RNA. The NAD-cap is present at the 5'-end of some RNAs and snoRNAs. In contrast to the canonical 5'-end N7 methylguanosine (m7G) cap, the NAD cap promotes mRNA decay. Also acts as a non-canonical decapping enzyme that removes the entire cap structure of m7G capped or incompletely capped RNAs. Has decapping activity toward incomplete 5'-end m7G cap mRNAs such as unmethylated 5'-end-capped RNA (cap0), while it has no activity toward 2'-O-ribose methylated m7G cap (cap1). Also possesses RNA 5'-pyrophosphohydrolase activity by hydrolyzing the 5'-end triphosphate to release pyrophosphates. Stimulates exoribonuclease activity of RAT1, allowing it to degrade RNAs with stable secondary structure more effectively. Required for the processing of nuclear mRNA and rRNA precursors. May promote termination of transcription by RNA polymerase II. The protein is Decapping nuclease RAI1 of Saccharomyces cerevisiae (strain ATCC 204508 / S288c) (Baker's yeast).